The sequence spans 127 residues: Thioredoxin-3, mitochondrial (127 aa).

The N-terminal 21 residues, Met1–Gln21, are a transit peptide targeting the mitochondrion. In terms of domain architecture, Thioredoxin spans Ser22–Leu127. Residues Cys55 and Cys58 each act as nucleophile in the active site. An intrachain disulfide couples Cys55 to Cys58.

Belongs to the thioredoxin family.

Its subcellular location is the mitochondrion. This Saccharomyces cerevisiae (strain ATCC 204508 / S288c) (Baker's yeast) protein is Thioredoxin-3, mitochondrial (TRX3).